A 466-amino-acid polypeptide reads, in one-letter code: Delta-1 crystallin (466 aa).

The protein belongs to the lyase 1 family. Argininosuccinate lyase subfamily. Homotetramer. Eye lens.

Functionally, delta crystallin, the principal crystallin in embryonic lens, is found only in birds and reptiles. Despite possessing the necessary catalytic residues, this protein does not function as an enzymatically active argininosuccinate lyase. This Anas platyrhynchos (Mallard) protein is Delta-1 crystallin (ASL1).